The primary structure comprises 221 residues: GFP-like non-fluorescent chromoprotein (221 aa).

A cross-link (2-iminomethyl-5-imidazolinone (Gln-Gly)) is located at residues 62–64 (QYG). Position 63 is a (E)-2,3-didehydrotyrosine (Tyr-63).

This sequence belongs to the GFP family. In terms of assembly, homotetramer. In terms of processing, contains a chromophore consisting of modified amino acid residues. The chromophore is formed by autocatalytic backbone condensation between Xaa-N and Gly-(N+2), oxidation of Tyr-(N+1) to didehydrotyrosine, and formation of a double bond to the alpha-amino nitrogen of residue Xaa-N. Maturation of the chromophore requires nothing other than molecular oxygen.

In terms of biological role, thought to play a role in photoprotection of the coral's resident symbiont microalgae's photosystems from photoinhibition caused by high light levels found near the surface of coral reefs. This is GFP-like non-fluorescent chromoprotein from Montipora efflorescens (Pore coral).